We begin with the raw amino-acid sequence, 399 residues long: S-adenosylmethionine synthase (399 aa).

Histidine 17 is an ATP binding site. Aspartate 19 lines the Mg(2+) pocket. Glutamate 45 lines the K(+) pocket. L-methionine is bound by residues glutamate 58 and glutamine 101. The interval 101–111 is flexible loop; sequence QSPDIAQGVDE. Residues 177–179, 244–245, aspartate 253, 259–260, alanine 276, and lysine 280 each bind ATP; these read DAK, RF, and RK. L-methionine is bound at residue aspartate 253. Position 284 (lysine 284) interacts with L-methionine.

The protein belongs to the AdoMet synthase family. In terms of assembly, homotetramer; dimer of dimers. Mg(2+) serves as cofactor. The cofactor is K(+).

Its subcellular location is the cytoplasm. It catalyses the reaction L-methionine + ATP + H2O = S-adenosyl-L-methionine + phosphate + diphosphate. It functions in the pathway amino-acid biosynthesis; S-adenosyl-L-methionine biosynthesis; S-adenosyl-L-methionine from L-methionine: step 1/1. Catalyzes the formation of S-adenosylmethionine (AdoMet) from methionine and ATP. The overall synthetic reaction is composed of two sequential steps, AdoMet formation and the subsequent tripolyphosphate hydrolysis which occurs prior to release of AdoMet from the enzyme. The polypeptide is S-adenosylmethionine synthase (Listeria innocua serovar 6a (strain ATCC BAA-680 / CLIP 11262)).